The sequence spans 684 residues: Phenoloxidase 1 (684 aa).

Positions 1 to 50 are cleaved as a propeptide — removed by PPAF1; sequence MSDKNKLLLLFDRPLETVIVPRGPDQEAFDVPVDLLSDRYKAIGVQVSNR. N-linked (GlcNAc...) asparagine glycosylation occurs at asparagine 80. 3 residues coordinate Cu cation: histidine 208, histidine 212, and histidine 237. Glutamate 349 (proton acceptor) is an active-site residue. N-linked (GlcNAc...) asparagine glycans are attached at residues asparagine 352 and asparagine 356. The Cu cation site is built by histidine 364, histidine 368, and histidine 404. 3 N-linked (GlcNAc...) asparagine glycosylation sites follow: asparagine 486, asparagine 491, and asparagine 545. 2 disulfide bridges follow: cysteine 579–cysteine 621 and cysteine 581–cysteine 628.

The protein belongs to the tyrosinase family. As to quaternary structure, dimer. Might form a homodimer or a heterodimer with PPO1. Might interact with PPAF2 (via CLIP domain); the interaction might be required for PPO1 activity. Requires Cu(2+) as cofactor. Propeptide cleaved by PPAF1. In terms of tissue distribution, hemocytes.

Its subcellular location is the secreted. This is a copper-containing oxidase that functions in the formation of pigments such as melanins and other polyphenolic compounds. Catalyzes the oxidation of o-diphenols (N-acetyldopamine, 4-methylcatechol and dopamine). Cannot oxidize monophenols and p-phenols (L-tyrosine, tyramine, gentisic acid and hydroquinone). Binds to the surface of hemocytes and is involved in hemocyte melanization. Activation of the enzyme in response to bacterial lipopolysaccharides (LPS) suggests it may play a role in innate immunity. In Holotrichia diomphalia (Korean black chafer), this protein is Phenoloxidase 1.